A 168-amino-acid polypeptide reads, in one-letter code: T-cell surface glycoprotein CD3 delta chain (168 aa).

The signal sequence occupies residues 1-21 (MEHSRFLSCLILAALLSQVNP). At 22–102 (RILKVLEPED…CVELDTATLA (81 aa)) the chain is on the extracellular side. Residues C37 and C74 are joined by a disulfide bond. N-linked (GlcNAc...) asparagine glycosylation is found at N38 and N56. Residues 103–123 (GMIITDIIATVLLALGVYCFA) traverse the membrane as a helical segment. Residues 124–168 (GHETGRFSRAADTQALMGNDQLYQPLRERNDAQYSRLGDKWARNK) lie on the Cytoplasmic side of the membrane. The ITAM domain maps to 135–163 (DTQALMGNDQLYQPLRERNDAQYSRLGDK). 2 positions are modified to phosphotyrosine: Y146 and Y157.

The TCR-CD3 complex is composed of a CD3D/CD3E and a CD3G/CD3E heterodimers that preferentially associate with TCRalpha and TCRbeta, respectively, to form TCRalpha/CD3E/CD3G and TCRbeta/CD3G/CD3E trimers. In turn, the hexamer interacts with CD3Z homodimer to form the TCR-CD3 complex. Alternatively, TCRalpha and TCRbeta can be replaced by TCRgamma and TCRdelta. Interacts with coreceptors CD4 and CD8. Phosphorylated on Tyr residues after T-cell receptor triggering by LCK in association with CD4/CD8. As to expression, CD3D is mostly present on T-lymphocytes with its TCR-CD3 partners. Present also in fetal NK-cells.

The protein localises to the cell membrane. In terms of biological role, part of the TCR-CD3 complex present on T-lymphocyte cell surface that plays an essential role in adaptive immune response. When antigen presenting cells (APCs) activate T-cell receptor (TCR), TCR-mediated signals are transmitted across the cell membrane by the CD3 chains CD3D, CD3E, CD3G and CD3Z. All CD3 chains contain immunoreceptor tyrosine-based activation motifs (ITAMs) in their cytoplasmic domain. Upon TCR engagement, these motifs become phosphorylated by Src family protein tyrosine kinases LCK and FYN, resulting in the activation of downstream signaling pathways. In addition of this role of signal transduction in T-cell activation, CD3D plays an essential role in thymocyte differentiation. Indeed, participates in correct intracellular TCR-CD3 complex assembly and surface expression. In absence of a functional TCR-CD3 complex, thymocytes are unable to differentiate properly. Interacts with CD4 and CD8 and thus serves to establish a functional link between the TCR and coreceptors CD4 and CD8, which is needed for activation and positive selection of CD4 or CD8 T-cells. The chain is T-cell surface glycoprotein CD3 delta chain (CD3D) from Bos taurus (Bovine).